The sequence spans 481 residues: Trigger factor (481 aa).

The region spanning 161–298 (GDQLTATVQT…VSEIQNRQLP (138 aa)) is the PPIase FKBP-type domain. A disordered region spans residues 173 to 245 (DGVPLHKLDE…PTTLIMEERR (73 aa)). Acidic residues predominate over residues 182–235 (EEDDDDDDDDDDDDDDDDDDDDDDDDDDDDDDDDDDDDDDDDDDDDDDDDDEGE).

The protein belongs to the FKBP-type PPIase family. Tig subfamily.

The protein localises to the cytoplasm. The catalysed reaction is [protein]-peptidylproline (omega=180) = [protein]-peptidylproline (omega=0). Involved in protein export. Acts as a chaperone by maintaining the newly synthesized protein in an open conformation. Functions as a peptidyl-prolyl cis-trans isomerase. The sequence is that of Trigger factor from Herpetosiphon aurantiacus (strain ATCC 23779 / DSM 785 / 114-95).